Consider the following 527-residue polypeptide: F-box-like/WD repeat-containing protein TBL1X (527 aa).

S2 carries the N-acetylserine modification. One can recognise a LisH domain in the interval 4–36; it reads TSDEVNFLVYRYLQESGFSHSAFTFGIESHISQ. Residues 41–86 enclose the F-box-like domain; sequence GTLVPPAALISILQKGLQYVEAEISINEDGTVFDGRPIESLSLIDA. K102 carries the N6-acetyllysine modification. Residues 127–164 are disordered; the sequence is TTPAAAAQQNPPKNGEATVNGEENGAHAINNHSKPMEI. WD repeat units lie at residues 180 to 219, 236 to 275, 277 to 316, 319 to 359, 360 to 399, 402 to 450, 453 to 492, and 494 to 526; these read GHESEVFICAWNPVSDLLASGSGDSTARIWNLNENSNGGS, PSNKDVTSLDWNSDGTLLATGSYDGFARIWTEDGNLASTL, QHKGPIFALKWNKKGNYILSAGVDKTTIIWDAHTGEAKQQ, FHSA…KTFQ, GHTNEVNAIKWDPSGMLLASCSDDMTLKIWSMKQDACVHD, AHSK…CIHT, KHQEPVYSVAFSPDGKYLASGSFDKCVHIWNTQSGSLVHS, and RGTGGIFEVCWNARGDKVGASASDGSVCVLDLR. A Glycyl lysine isopeptide (Lys-Gly) (interchain with G-Cter in SUMO2) cross-link involves residue K290.

Belongs to the WD repeat EBI family. In terms of assembly, homotetramer; dimer of dimers. Component of the N-Cor repressor complex, at least composed of NCOR1, NCOR2, HDAC3, TBL1X, TBL1R, CORO2A and GPS2. Component of a E3 ubiquitin ligase complex containing UBE2D1, SIAH1, CACYBP/SIP, SKP1, APC and TBL1X. Interacts with GPS2 (when sumoylated); leading to protect GPS2 against degradation by the proteasome. Probably part of other corepressor complexes, that do not contain NCOR1 and NCOR2. Interacts with histones H2B, H3a and H4. Interacts with MECP2; recruits TBL1X to the heterochromatin foci. Interacts with USP44. As to expression, expressed in the cochlea.

Its subcellular location is the nucleus. F-box-like protein involved in the recruitment of the ubiquitin/19S proteasome complex to nuclear receptor-regulated transcription units. Plays an essential role in transcription activation mediated by nuclear receptors. Probably acts as integral component of corepressor complexes that mediates the recruitment of the 19S proteasome complex, leading to the subsequent proteasomal degradation of transcription repressor complexes, thereby allowing cofactor exchange. This chain is F-box-like/WD repeat-containing protein TBL1X (Tbl1x), found in Mus musculus (Mouse).